A 302-amino-acid chain; its full sequence is D-alanine--D-alanine ligase (302 aa).

The ATP-grasp domain occupies 100-294 (KALFRREGLL…FPELVEKLIQ (195 aa)). 127–180 (GLNYPIFVKSNIGGSSVNVHLVTNYEELFIAMEALFNAGEEVLLEEAIIGQEVT) lines the ATP pocket. Residues Asp-248, Glu-261, and Asn-263 each contribute to the Mg(2+) site.

It belongs to the D-alanine--D-alanine ligase family. The cofactor is Mg(2+). Mn(2+) is required as a cofactor.

The protein resides in the cytoplasm. It carries out the reaction 2 D-alanine + ATP = D-alanyl-D-alanine + ADP + phosphate + H(+). Its pathway is cell wall biogenesis; peptidoglycan biosynthesis. Its function is as follows. Cell wall formation. This Lawsonia intracellularis (strain PHE/MN1-00) protein is D-alanine--D-alanine ligase.